A 466-amino-acid polypeptide reads, in one-letter code: 3-isopropylmalate dehydratase large subunit (466 aa).

Cysteine 347, cysteine 407, and cysteine 410 together coordinate [4Fe-4S] cluster.

It belongs to the aconitase/IPM isomerase family. LeuC type 1 subfamily. In terms of assembly, heterodimer of LeuC and LeuD. [4Fe-4S] cluster is required as a cofactor.

It catalyses the reaction (2R,3S)-3-isopropylmalate = (2S)-2-isopropylmalate. It functions in the pathway amino-acid biosynthesis; L-leucine biosynthesis; L-leucine from 3-methyl-2-oxobutanoate: step 2/4. Catalyzes the isomerization between 2-isopropylmalate and 3-isopropylmalate, via the formation of 2-isopropylmaleate. The protein is 3-isopropylmalate dehydratase large subunit of Escherichia coli (strain 55989 / EAEC).